The following is a 179-amino-acid chain: MAKLHDYYKDEVVKKLMTEFNYNSVMQVPRVEKITLNMGVGEAIADKKLLDNAAADLAAFSRQKPLSTKARKFVACFKIRQGYPIGCKVTLRGERMWEFFERLITIAVPRIRDFRGLSAKSFDGRGNYSMGVREQIIFPEIDYDKVDRVRGLDITITTTAKSDEEGRALLAAFDFPFRK.

Residue lysine 3 is modified to N6-acetyllysine.

The protein belongs to the universal ribosomal protein uL5 family. Part of the 50S ribosomal subunit; part of the 5S rRNA/L5/L18/L25 subcomplex. Contacts the 5S rRNA and the P site tRNA. Forms a bridge to the 30S subunit in the 70S ribosome.

Functionally, this is one of the proteins that bind and probably mediate the attachment of the 5S RNA into the large ribosomal subunit, where it forms part of the central protuberance. In the 70S ribosome it contacts protein S13 of the 30S subunit (bridge B1b), connecting the 2 subunits; this bridge is implicated in subunit movement. Contacts the P site tRNA; the 5S rRNA and some of its associated proteins might help stabilize positioning of ribosome-bound tRNAs. This Shigella flexneri protein is Large ribosomal subunit protein uL5.